Reading from the N-terminus, the 1353-residue chain is Protein prickle (1353 aa).

Disordered regions lie at residues 130-206 (VDDG…TKRN), 266-292 (QEEE…PPLP), and 500-540 (AKYS…SAHA). Residues 147-165 (TPTATATAGRPLFPLSSSP) are compositionally biased toward low complexity. Basic residues predominate over residues 166–178 (RRSKKLLRSLRAH). Basic and acidic residues predominate over residues 179 to 189 (VKGESRPEKPA). The span at 514-532 (LSPALSTPSPPSLLHHPAA) shows a compositional bias: low complexity. The PET domain occupies 548 to 656 (MDMQRQSHSD…NVRQLMSARP (109 aa)). LIM zinc-binding domains lie at 655-719 (RPCD…ETLK), 720-780 (PRCS…MFAE), and 781-843 (YCDY…GEPP). Disordered regions lie at residues 840-892 (GEPP…HQAS), 933-962 (HCRS…NMSP), and 1062-1303 (ADIM…SSSS). Low complexity predominate over residues 861 to 892 (TQRVRPQTRITSSHASSSPPMSPQQQQQHQAS). 2 stretches are compositionally biased toward polar residues: residues 952–962 (RASSTSHNMSP) and 1111–1120 (SLNTPLSAHS). A compositionally biased stretch (low complexity) spans 1130-1142 (SILSGASSSSPMS). A compositionally biased stretch (basic and acidic residues) spans 1177–1205 (GDKDRDRDRERDRDRDRDKGGDKDRESGR). 2 stretches are compositionally biased toward basic residues: residues 1207 to 1220 (GPGH…RRKS) and 1228 to 1240 (NHHR…RSHS). Basic and acidic residues predominate over residues 1269–1284 (ETAHKSPRQQRERERE).

This sequence belongs to the prickle / espinas / testin family. Interacts with dsh; PET and LIM domains interact with dsh DEP domain, in wing cells. Interacts with Vang in photoreceptor cells.

It is found in the cell membrane. Functionally, acts in a planar cell polarity (PCP) complex; polarization along the apical/basal axis of epithelial cells. PCP signaling in the wing disk requires the receptor fz and the cytoplasmic proteins dsh and pk. These act in a feedback loop leading to activation of the jnk cascade and subsequent polarized arrangement of hairs and bristles. Dgo and pk compete with one another for dsh binding, thereby modulating fz dsh activity and ensuring tight control over fz PCP signaling. Vang, stan and pk function together to regulate the establishment of tissue polarity in the adult eye. In Drosophila pseudoobscura pseudoobscura (Fruit fly), this protein is Protein prickle.